The primary structure comprises 133 residues: MSNINLVQLVRDSLFTIGCPPSIITDLDSHSAITISLDSMPAINIALVNEQVMLWANFDAPSDVKLQSSAYNILNLMLMNFSYSINELVELHRSDEYLQLRVVIKDDYVHDGIVFAEILHEFYQRMEILNEVL.

It belongs to the SpaK family. Homodimer.

Functionally, required for surface presentation of invasion plasmid antigens. Chaperone specialized in the storage of effectors within the bacterial cytoplasm, maintaining them in a secretion-competent state, and allowing their immediate delivery to target cells upon contact of the bacterium with the host cells. This chain is Surface presentation of antigens protein SpaK (spaK), found in Shigella sonnei.